A 1479-amino-acid polypeptide reads, in one-letter code: Putative receptor-type tyrosine-protein phosphatase mosPTP-1 (1479 aa).

The first 28 residues, 1–28 (MKPRLLTTVTTWLALVLPVVYLSRPCQA), serve as a signal peptide directing secretion. Residues 29–365 (LPTVNFTANY…RQSYNDYNLA (337 aa)) are Extracellular-facing. Residues Asn-33, Asn-40, Asn-146, Asn-182, Asn-248, Asn-294, and Asn-306 are each glycosylated (N-linked (GlcNAc...) asparagine). Fibronectin type-III domains follow at residues 143 to 242 (KPLN…AGPS) and 243 to 346 (APKV…VQLN). The chain crosses the membrane as a helical span at residues 366–386 (VMIGILICCFGLLFIVLTILL). The Cytoplasmic portion of the chain corresponds to 387-1479 (WKKCFHAAYY…AKLRAVVRVE (1093 aa)). Tyrosine-protein phosphatase domains follow at residues 452–717 (FSKE…LVEA) and 740–992 (IDSQ…LSYM). The active-site Phosphocysteine intermediate is the Cys-658.

Belongs to the protein-tyrosine phosphatase family. Receptor class subfamily. In terms of assembly, interacts with C-type lectin mosGCTL-1. Interacts with C-type lectin mosGCTL-7.

Its subcellular location is the cell membrane. The catalysed reaction is O-phospho-L-tyrosyl-[protein] + H2O = L-tyrosyl-[protein] + phosphate. Its function is as follows. Putative protein tyrosine-protein phosphatase. (Microbial infection) Facilitates West Nile virus infection in mosquitoes. The protein is Putative receptor-type tyrosine-protein phosphatase mosPTP-1 of Culex quinquefasciatus (Southern house mosquito).